Consider the following 571-residue polypeptide: Double-stranded RNA-binding protein Staufen homolog 2 (571 aa).

Residues 8–75 form the DRBM 1 domain; that stretch reads TPMCLVNELA…ANKALTESTL (68 aa). 2 positions are modified to phosphoserine: Pro-9 and Val-13. Arg-18 bears the Phosphothreonine mark. Position 21 is a phosphoserine (Ser-21). Disordered regions lie at residues 71–94 and 178–203; these read TEST…PGSI and ALQN…DDKD. Positions 83 to 94 are enriched in polar residues; sequence PKSNVNNNPGSI. A DRBM 2 domain is found at 95 to 181; the sequence is TPTVELNGLA…AMKALQALQN (87 aa). Phosphoserine is present on Ser-188. A compositionally biased stretch (basic and acidic residues) spans 194 to 203; it reads SGKEMDDDKD. 2 DRBM domains span residues 207-274 and 307-375; these read SEIS…ELKK and NPIS…QLGY. Short sequence motifs (nuclear localization signal) lie at residues 273–317 and 373–412; these read KKLP…QIQQ and LGYK…PKGI. The segment at 381 to 571 is required for dendritic transport; that stretch reads LQDQLDKTGE…QDCKKSKSVI (191 aa). The segment at 382-413 is disordered; sequence QDQLDKTGENKGWSGPKPGFPEPANNTPKGIL. Ser-395, Ser-416, Ser-426, Ser-440, Ser-456, and Ser-493 each carry phosphoserine. Positions 546–571 are disordered; sequence LREKADNNQANPGSITQDCKKSKSVI. Over residues 552 to 562 the composition is skewed to polar residues; sequence NNQANPGSITQ.

In terms of assembly, identified in a mRNP complex, at least composed of DHX9, DDX3X, ELAVL1, HNRNPU, IGF2BP1, ILF3, PABPC1, PCBP2, PTBP2, STAU1, STAU2, SYNCRIP and YBX1. Interacts with the exportin XPO5. This requires RNA and RAN bound to GTP. Interacts with microtubules. Isoform 2 and isoform 3 may also interact with ribosomes, and this association is independent of translation. Interacts with TRIM71 (via NHL repeats) in an RNA-dependent manner. In terms of tissue distribution, expressed in both somata and dendrites of hippocampal neurons.

Its subcellular location is the nucleus. It is found in the nucleolus. The protein resides in the cytoplasm. It localises to the endoplasmic reticulum. In terms of biological role, RNA-binding protein required for the microtubule-dependent transport of neuronal RNA from the cell body to the dendrite. As protein synthesis occurs within the dendrite, the localization of specific mRNAs to dendrites may be a prerequisite for neurite outgrowth and plasticity at sites distant from the cell body. This Rattus norvegicus (Rat) protein is Double-stranded RNA-binding protein Staufen homolog 2 (Stau2).